Reading from the N-terminus, the 455-residue chain is Venom prothrombin activator hopsarin-D (455 aa).

The N-terminal stretch at 1–20 is a signal peptide; the sequence is MAPQLLLCLILTFLWSVPEA. A propeptide spanning residues 21 to 40 is cleaved from the precursor; the sequence is ESNVFLKSKVANRFLQRTKR. Positions 41-86 constitute a Gla domain; sequence SNSLFEEIRPGNIERECIEEKCSKEEAREVFEDNEKTETFWNVYVD. A 4-carboxyglutamate mark is found at glutamate 46, glutamate 47, glutamate 54, glutamate 56, glutamate 59, glutamate 60, glutamate 65, glutamate 66, glutamate 69, glutamate 72, and glutamate 75. An intrachain disulfide couples cysteine 57 to cysteine 62. Residues 86–121 enclose the EGF-like 1; calcium-binding domain; that stretch reads DGDQCSSNPCHYHGTCKDGIGSYTCTCLPNYEGKNC. 10 disulfides stabilise this stretch: cysteine 90–cysteine 101, cysteine 95–cysteine 110, cysteine 112–cysteine 121, cysteine 129–cysteine 140, cysteine 136–cysteine 149, cysteine 151–cysteine 164, cysteine 172–cysteine 328, cysteine 236–cysteine 252, cysteine 376–cysteine 390, and cysteine 401–cysteine 429. A glycan (O-linked (Hex...) serine) is linked at serine 92. An EGF-like 2 domain is found at 129–164; that stretch reads CRAFNGNCWHFCKRVQSETQCSCAESYRLGVDGHSC. Positions 182 to 209 are cleaved as a propeptide — activation peptide; sequence REASLPDFVQSQKATLLKKSDNPSPDIR. A Peptidase S1 domain is found at 210–453; it reads IVNGMDSKLG…FIPWIKKIMS (244 aa). The active-site Charge relay system is the histidine 251. Residue asparagine 254 is glycosylated (N-linked (GlcNAc...) asparagine). The active-site Charge relay system is aspartate 308. Serine 405 functions as the Charge relay system in the catalytic mechanism.

Belongs to the peptidase S1 family. Snake venom subfamily. As to quaternary structure, heterodimer of a light chain and a heavy chain; disulfide-linked. Post-translationally, the vitamin K-dependent, enzymatic carboxylation of some glutamate residues allows the modified protein to bind calcium. Expressed by the venom gland.

The protein localises to the secreted. The catalysed reaction is Selective cleavage of Arg-|-Thr and then Arg-|-Ile bonds in prothrombin to form thrombin.. Functionally, snake prothrombin activator that attacks the hemostatic system of prey. This protein is functionally similar to blood coagulation factor Xa. The procoagulant activity of hopsarin-D is approximately 10-fold lower than that of trocarin-D and FXa. In Hoplocephalus stephensii (Stephens's banded snake), this protein is Venom prothrombin activator hopsarin-D.